A 4451-amino-acid chain; its full sequence is Gramicidin S synthase 2 (4451 aa).

A domain 1 (proline-activating) region spans residues 467 to 1044 (DKTIHQLFTE…IQEISNYING (578 aa)). Carrier domains lie at 971 to 1046 (VPTN…NGAK), 2006 to 2081 (APSS…ADGQ), 3052 to 3127 (RPRT…EETD), and 4090 to 4165 (APRN…THQE). O-(pantetheine 4'-phosphoryl)serine is present on residues serine 1006, serine 2041, serine 3087, and serine 4125. The interval 1521-2080 (DHVAVGWKDQ…SALAQYIADG (560 aa)) is domain 2 (valine-activating). A domain 3 (ornithine-activating) region spans residues 2538-3135 (YATNKIFHEL…TDTEQYMAIQ (598 aa)). The segment at 3591–4173 (IQELFEEQVK…QESENNVHQP (583 aa)) is domain 4 (leucine-activating).

Belongs to the ATP-dependent AMP-binding enzyme family. In terms of assembly, large multienzyme complex of GrsA and GrsB. Pantetheine 4'-phosphate is required as a cofactor.

The protein operates within antibiotic biosynthesis; gramicidin S biosynthesis. This protein is a multifunctional enzyme, able to activate and polymerize the amino acids Pro, Val, Orn and Leu. Activation sites for these AA consist of individual domains. The protein is Gramicidin S synthase 2 (grsB) of Aneurinibacillus migulanus (Bacillus migulanus).